The sequence spans 474 residues: Mercuric reductase (474 aa).

Positions 19, 39, and 44 each coordinate FAD. A disulfide bond links cysteine 45 and cysteine 50. FAD is bound by residues lysine 54, alanine 119, aspartate 315, and valine 323. Cysteine 471 and cysteine 472 together coordinate Hg(2+).

This sequence belongs to the class-I pyridine nucleotide-disulfide oxidoreductase family. In terms of assembly, homodimer. FAD is required as a cofactor.

The catalysed reaction is Hg + NADP(+) + H(+) = Hg(2+) + NADPH. Functionally, resistance to Hg(2+) in bacteria appears to be governed by a specialized system which includes mercuric reductase. MerA protein is responsible for volatilizing mercury as Hg(0). The chain is Mercuric reductase (merA) from Streptomyces lividans.